The chain runs to 278 residues: 2-succinyl-6-hydroxy-2,4-cyclohexadiene-1-carboxylate synthase (278 aa).

This sequence belongs to the AB hydrolase superfamily. MenH family. As to quaternary structure, monomer.

It catalyses the reaction 5-enolpyruvoyl-6-hydroxy-2-succinyl-cyclohex-3-ene-1-carboxylate = (1R,6R)-6-hydroxy-2-succinyl-cyclohexa-2,4-diene-1-carboxylate + pyruvate. It participates in quinol/quinone metabolism; 1,4-dihydroxy-2-naphthoate biosynthesis; 1,4-dihydroxy-2-naphthoate from chorismate: step 3/7. Its pathway is quinol/quinone metabolism; menaquinone biosynthesis. In terms of biological role, catalyzes a proton abstraction reaction that results in 2,5-elimination of pyruvate from 2-succinyl-5-enolpyruvyl-6-hydroxy-3-cyclohexene-1-carboxylate (SEPHCHC) and the formation of 2-succinyl-6-hydroxy-2,4-cyclohexadiene-1-carboxylate (SHCHC). This is 2-succinyl-6-hydroxy-2,4-cyclohexadiene-1-carboxylate synthase from Photorhabdus laumondii subsp. laumondii (strain DSM 15139 / CIP 105565 / TT01) (Photorhabdus luminescens subsp. laumondii).